A 498-amino-acid polypeptide reads, in one-letter code: MRINPTTSSPVVSTLEEKNLGRIAQIIGPVLDVVFPPGKMPNIYNALVVKGRDTVGQQINVTCEVQQLLGNNRVRAVAMSATDGLMRGMEVIDTGAPLSVPVGGATLGRIFNVLGEPVDNLGPVDTRTTSPIHRSAPAFIQLDTKLSIFETGIKVVDLLAPYRRGGKIGLFGGAGVGKTVLIMELINNIAKAHGGVSVFGGVGERTREGNDLYMEMKESGVINEKNIAESKVALVYGQMNEPPGARMRVGLTALTMAEYFRDVNEQDVLLFIDNIFRFVQAGSEVSALLGRMPSAVGYQPTLSTEMGSLQERITSTKEGSITSIQAVYVPADDLTDPAPATTFAHLDATTVLSRVLAAKGIYPAVDPLDSTSTMLQPRIVGEEHYETAQRVKQTSQRYKELQDIIAILGLDELSEEDRLTVARARKIERFLSQPFFVAEVFTGSPGKYVGLAETIRGFQLILSGELDGLPEQAFYLVGNIDEATAKAMNLEVESKLKK.

172 to 179 (GGAGVGKT) serves as a coordination point for ATP.

It belongs to the ATPase alpha/beta chains family. As to quaternary structure, F-type ATPases have 2 components, CF(1) - the catalytic core - and CF(0) - the membrane proton channel. CF(1) has five subunits: alpha(3), beta(3), gamma(1), delta(1), epsilon(1). CF(0) has four main subunits: a(1), b(1), b'(1) and c(9-12).

Its subcellular location is the plastid. It localises to the chloroplast thylakoid membrane. It catalyses the reaction ATP + H2O + 4 H(+)(in) = ADP + phosphate + 5 H(+)(out). Its function is as follows. Produces ATP from ADP in the presence of a proton gradient across the membrane. The catalytic sites are hosted primarily by the beta subunits. In Balaka seemannii, this protein is ATP synthase subunit beta, chloroplastic.